Reading from the N-terminus, the 283-residue chain is uncharacterized protein (283 aa).

A signal peptide spans 1-23; the sequence is MFAFASFAISAIFFLCSFSYVSS.

The protein resides in the secreted. This is an uncharacterized protein from Schizosaccharomyces pombe (strain 972 / ATCC 24843) (Fission yeast).